We begin with the raw amino-acid sequence, 317 residues long: Melanocyte-stimulating hormone receptor (317 aa).

The Extracellular segment spans residues 1–37 (MPVQGSQRRLLGSLNSTPTATPHLGLAANQTGARCLE). Asn29 carries an N-linked (GlcNAc...) asparagine glycan. Residues 38 to 63 (VSVPDGLFLSLGLVSLVENVLVVTAI) traverse the membrane as a helical segment. Topologically, residues 64–72 (AKNRNLHSP) are cytoplasmic. The helical transmembrane segment at 73 to 93 (MYCFICCLALSDLLVSGSNML) threads the bilayer. Topologically, residues 94–118 (ETAVTLLLEAGALAARAAVVQQLDN) are extracellular. The chain crosses the membrane as a helical span at residues 119 to 140 (VIDVITCSSMLSSLCFLGAIAV). Topologically, residues 141–163 (DRYISIFYALRYHSIVTLPRARR) are cytoplasmic. The chain crosses the membrane as a helical span at residues 164-183 (AVAAIWVASVLFSTLFIAYY). The Extracellular portion of the chain corresponds to 184-191 (DHAAVLLC). The chain crosses the membrane as a helical span at residues 192–211 (LVIFFLAMLVLMAVLYVHML). Residues 212–240 (ARACQHAQGIARLHKRQRLAHQGFGLKGA) are Cytoplasmic-facing. The helical transmembrane segment at 241 to 266 (ATLTILLGIFFLCWGPFFLHLTLIVL) threads the bilayer. The Extracellular portion of the chain corresponds to 267–279 (CPQHPTCSCIFKN). The helical transmembrane segment at 280 to 300 (FNLFLALIICNAIIDPLIYAF) threads the bilayer. Over 301–317 (RSQELRRTLKEVLLCSW) the chain is Cytoplasmic. Residue Cys315 is the site of S-palmitoyl cysteine attachment.

This sequence belongs to the G-protein coupled receptor 1 family. Interacts with MGRN1, but does not undergo MGRN1-mediated ubiquitination; this interaction competes with GNAS-binding and thus inhibits agonist-induced cAMP production. Interacts with OPN3; the interaction results in a decrease in MC1R-mediated cAMP signaling and ultimately a decrease in melanin production in melanocytes.

The protein localises to the cell membrane. Its function is as follows. Receptor for MSH (alpha, beta and gamma) and ACTH. The activity of this receptor is mediated by G proteins which activate adenylate cyclase. Mediates melanogenesis, the production of eumelanin (black/brown) and phaeomelanin (red/yellow), via regulation of cAMP signaling in melanocytes. The sequence is that of Melanocyte-stimulating hormone receptor (MC1R) from Papio hamadryas (Hamadryas baboon).